A 177-amino-acid chain; its full sequence is B-phycoerythrin beta chain (177 aa).

The phycourobilin site is built by Cys-50 and Cys-61. Asn-72 is modified (N4-methylasparagine). Residues Cys-82 and Cys-158 each contribute to the (2R,3E)-phycoerythrobilin site.

Belongs to the phycobiliprotein family. Heteromer of 6 alpha, 6 beta and one gamma chain. In terms of processing, contains two covalently linked phycoerythrobilin chromophores and one covalently linked phycourobilin chromophore.

The protein localises to the plastid. Its subcellular location is the chloroplast thylakoid membrane. In terms of biological role, light-harvesting photosynthetic bile pigment-protein from the phycobiliprotein complex. This is B-phycoerythrin beta chain (cpeB) from Porphyridium purpureum (Red alga).